The primary structure comprises 132 residues: Mercuric resistance operon regulatory protein (132 aa).

Residues 2–71 (KFRIGELADK…LNEIDKLLGV (70 aa)) form the HTH merR-type domain. The segment at residues 5–24 (IGELADKCGVNKETIRYYER) is a DNA-binding region (H-T-H motif). Hg(2+)-binding residues include Cys79, Cys114, and Cys123.

As to quaternary structure, homodimer.

Its function is as follows. Mediates the mercuric-dependent induction of mercury resistance operon. In the absence of mercury MerR represses transcription by binding tightly to the mer operator region; when mercury is present the dimeric complex binds a single ion and becomes a potent transcriptional activator, while remaining bound to the mer site. This is Mercuric resistance operon regulatory protein (merR1) from Bacillus cereus.